We begin with the raw amino-acid sequence, 142 residues long: Nucleoside diphosphate kinase (142 aa).

ATP-binding residues include Lys-11, Phe-59, Arg-87, Thr-93, Arg-104, and Asn-114. Catalysis depends on His-117, which acts as the Pros-phosphohistidine intermediate.

It belongs to the NDK family. Homotetramer. It depends on Mg(2+) as a cofactor.

It is found in the cytoplasm. It catalyses the reaction a 2'-deoxyribonucleoside 5'-diphosphate + ATP = a 2'-deoxyribonucleoside 5'-triphosphate + ADP. It carries out the reaction a ribonucleoside 5'-diphosphate + ATP = a ribonucleoside 5'-triphosphate + ADP. In terms of biological role, major role in the synthesis of nucleoside triphosphates other than ATP. The ATP gamma phosphate is transferred to the NDP beta phosphate via a ping-pong mechanism, using a phosphorylated active-site intermediate. The sequence is that of Nucleoside diphosphate kinase from Dechloromonas aromatica (strain RCB).